Consider the following 297-residue polypeptide: Putative S-adenosyl-L-methionine-dependent methyltransferase Mjls_1072 (297 aa).

Residues aspartate 124 and 153-154 (DL) contribute to the S-adenosyl-L-methionine site.

It belongs to the UPF0677 family.

Functionally, exhibits S-adenosyl-L-methionine-dependent methyltransferase activity. The chain is Putative S-adenosyl-L-methionine-dependent methyltransferase Mjls_1072 from Mycobacterium sp. (strain JLS).